The primary structure comprises 447 residues: Na(+)-translocating NADH-quinone reductase subunit A (447 aa).

The protein belongs to the NqrA family. In terms of assembly, composed of six subunits; NqrA, NqrB, NqrC, NqrD, NqrE and NqrF.

The catalysed reaction is a ubiquinone + n Na(+)(in) + NADH + H(+) = a ubiquinol + n Na(+)(out) + NAD(+). Its function is as follows. NQR complex catalyzes the reduction of ubiquinone-1 to ubiquinol by two successive reactions, coupled with the transport of Na(+) ions from the cytoplasm to the periplasm. NqrA to NqrE are probably involved in the second step, the conversion of ubisemiquinone to ubiquinol. This chain is Na(+)-translocating NADH-quinone reductase subunit A, found in Klebsiella pneumoniae subsp. pneumoniae (strain ATCC 700721 / MGH 78578).